A 174-amino-acid chain; its full sequence is Peptide deformylase (174 aa).

Residues Cys94 and His136 each contribute to the Fe cation site. The active site involves Glu137. His140 is a Fe cation binding site.

The protein belongs to the polypeptide deformylase family. Fe(2+) is required as a cofactor.

It catalyses the reaction N-terminal N-formyl-L-methionyl-[peptide] + H2O = N-terminal L-methionyl-[peptide] + formate. Its function is as follows. Removes the formyl group from the N-terminal Met of newly synthesized proteins. Requires at least a dipeptide for an efficient rate of reaction. N-terminal L-methionine is a prerequisite for activity but the enzyme has broad specificity at other positions. This is Peptide deformylase from Rhizobium meliloti (strain 1021) (Ensifer meliloti).